A 580-amino-acid polypeptide reads, in one-letter code: Putative adenine deaminase YerA (580 aa).

Ser399 is modified (phosphoserine).

It belongs to the metallo-dependent hydrolases superfamily. Adenine deaminase family.

The enzyme catalyses adenine + H2O + H(+) = hypoxanthine + NH4(+). The polypeptide is Putative adenine deaminase YerA (yerA) (Bacillus subtilis (strain 168)).